We begin with the raw amino-acid sequence, 347 residues long: Queuosine 5'-phosphate N-glycosylase/hydrolase (347 aa).

The queuine site is built by H53, F237, D239, D321, and D326. D239 (nucleophile or transition state stabilizer) is an active-site residue.

The protein belongs to the QNG1 protein family.

It catalyses the reaction queuosine 5'-phosphate + H2O = queuine + D-ribose 5-phosphate. In terms of biological role, catalyzes the hydrolysis of queuosine 5'-phosphate, releasing the nucleobase queuine (q). Is required for salvage of queuine from exogenous queuosine (Q) that is imported and then converted to queuosine 5'-phosphate intracellularly. This is Queuosine 5'-phosphate N-glycosylase/hydrolase from Nematostella vectensis (Starlet sea anemone).